A 917-amino-acid chain; its full sequence is Isoleucine--tRNA ligase (917 aa).

The 'HIGH' region motif lies at 57–67 (PYANGNLHMGH). E554 is a binding site for L-isoleucyl-5'-AMP. The 'KMSKS' region motif lies at 595-599 (KMSKS). K598 contributes to the ATP binding site. Residues C886, C889, C906, and C909 each coordinate Zn(2+).

The protein belongs to the class-I aminoacyl-tRNA synthetase family. IleS type 1 subfamily. In terms of assembly, monomer. Zn(2+) serves as cofactor.

It localises to the cytoplasm. It carries out the reaction tRNA(Ile) + L-isoleucine + ATP = L-isoleucyl-tRNA(Ile) + AMP + diphosphate. Its function is as follows. Catalyzes the attachment of isoleucine to tRNA(Ile). As IleRS can inadvertently accommodate and process structurally similar amino acids such as valine, to avoid such errors it has two additional distinct tRNA(Ile)-dependent editing activities. One activity is designated as 'pretransfer' editing and involves the hydrolysis of activated Val-AMP. The other activity is designated 'posttransfer' editing and involves deacylation of mischarged Val-tRNA(Ile). In Staphylococcus aureus (strain Mu3 / ATCC 700698), this protein is Isoleucine--tRNA ligase.